Here is a 309-residue protein sequence, read N- to C-terminus: NADH-cytochrome b5 reductase 1 (309 aa).

A helical membrane pass occupies residues 31 to 51; the sequence is DWVVYSVALALALGTWKFFQL. Positions 60 to 168 constitute an FAD-binding FR-type domain; that stretch reads TKFQEFELKE…RGPKGAFVYQ (109 aa). Residues 148–163 and 174–208 each bind FAD; these read AGLSVGQSIRVRGPKG and HFGMIAGGTGITPMLQVVRAIVRGRAAGDTTQVDL.

This sequence belongs to the flavoprotein pyridine nucleotide cytochrome reductase family. In terms of assembly, monomer. Component of the 2-(3-amino-3-carboxypropyl)histidine synthase complex composed of DPH1, DPH2, DPH3 and a NADH-dependent reductase, predominantly CBR1. The cofactor is FAD.

The protein localises to the mitochondrion outer membrane. The catalysed reaction is 2 Fe(III)-[cytochrome b5] + NADH = 2 Fe(II)-[cytochrome b5] + NAD(+) + H(+). It carries out the reaction 2 Fe(3+)-[Dph3] + NADH = 2 Fe(2+)-[Dph3] + NAD(+) + H(+). The protein operates within protein modification; peptidyl-diphthamide biosynthesis. NADH-dependent reductase for DPH3 and cytochrome b5. Required for the first step of diphthamide biosynthesis, a post-translational modification of histidine which occurs in elongation factor 2. DPH1 and DPH2 transfer a 3-amino-3-carboxypropyl (ACP) group from S-adenosyl-L-methionine (SAM) to a histidine residue, the reaction is assisted by a reduction system comprising DPH3 and a NADH-dependent reductase, predominantly CBR1. By reducing DPH3, also involved in the formation of the tRNA wobble base modification mcm5s 2U (5-methoxycarbonylmethyl-2-thiouridine), mediated by the elongator complex. The cytochrome b5/NADH cytochrome b5 reductase electron transfer system supports the catalytic activity of several sterol biosynthetic enzymes. The chain is NADH-cytochrome b5 reductase 1 (CBR1) from Pyricularia oryzae (strain 70-15 / ATCC MYA-4617 / FGSC 8958) (Rice blast fungus).